A 545-amino-acid chain; its full sequence is MTKNYIFITGGVVSSLGKGIAAASLGAILKARNLNITIIKLDPYINVDPGTISPIQHGEVFVTEDGAETDLDLGHYERFIHTKMTFLNNFTTGGVYSQVLKKERRGDYLGATIQVIPHITNAIKERIILCSENSNIILVEIGGTVGDIESLPFLEAIRQMAVDIGRKNVIYIHLTLVPYIATAGEIKTKPTQHSVKQLLSIGIQPDILICRSEKTVPLHERKKIALFCNVPVDAVISLKDVNSIYKIPKLLKNQKLDDYICNYFKLNVPEADLQEWEEVIYAEKNFNNTIVIGIIGKYIKLPDAYKSVMEALKHAGFKNKIKVDIQLINSQEVENKNFQILKNLNGILIPGGFGDRGIVGKLLSIQYARENHIPYFGICLGMQIAIIEFAQNVVGIKEANSTEFDPQCKYPIIDLIKNRPNNSSKNYNKIENRINLGGTMRLGSQPCKLSANSLSRKLYNQEIIIERHRHRYEVNNLLFKKIEAAGLQVTGRSQKNNVVEIIELSNHPWFLACQFHPEFTSTPRDGHPLFIDFIKSAGKHKKNFI.

Residues 1 to 266 form an amidoligase domain region; that stretch reads MTKNYIFITG…DDYICNYFKL (266 aa). Serine 14 lines the CTP pocket. Serine 14 contributes to the UTP binding site. Residues 15–20 and aspartate 72 contribute to the ATP site; that span reads SLGKGI. 2 residues coordinate Mg(2+): aspartate 72 and glutamate 140. CTP is bound by residues 147 to 149, 187 to 192, and lysine 223; these read DIE and KTKPTQ. Residues 187-192 and lysine 223 contribute to the UTP site; that span reads KTKPTQ. Residue 239–241 coordinates ATP; the sequence is KDV. One can recognise a Glutamine amidotransferase type-1 domain in the interval 291–543; sequence VIGIIGKYIK…IKSAGKHKKN (253 aa). Glycine 352 contacts L-glutamine. Cysteine 379 acts as the Nucleophile; for glutamine hydrolysis in catalysis. L-glutamine is bound by residues 380-383, glutamate 403, and arginine 471; that span reads LGMQ. Active-site residues include histidine 516 and glutamate 518.

This sequence belongs to the CTP synthase family. As to quaternary structure, homotetramer.

It catalyses the reaction UTP + L-glutamine + ATP + H2O = CTP + L-glutamate + ADP + phosphate + 2 H(+). The catalysed reaction is L-glutamine + H2O = L-glutamate + NH4(+). The enzyme catalyses UTP + NH4(+) + ATP = CTP + ADP + phosphate + 2 H(+). It participates in pyrimidine metabolism; CTP biosynthesis via de novo pathway; CTP from UDP: step 2/2. Allosterically activated by GTP, when glutamine is the substrate; GTP has no effect on the reaction when ammonia is the substrate. The allosteric effector GTP functions by stabilizing the protein conformation that binds the tetrahedral intermediate(s) formed during glutamine hydrolysis. Inhibited by the product CTP, via allosteric rather than competitive inhibition. Its function is as follows. Catalyzes the ATP-dependent amination of UTP to CTP with either L-glutamine or ammonia as the source of nitrogen. Regulates intracellular CTP levels through interactions with the four ribonucleotide triphosphates. The sequence is that of CTP synthase from Buchnera aphidicola subsp. Acyrthosiphon pisum (strain 5A).